The primary structure comprises 60 residues: MAVPKQKRSRSRTHHKRAKIYRAFSVPVSVCPNCGAPKLPHRVCLNCGHYGKKQVFEVAE.

Belongs to the bacterial ribosomal protein bL32 family.

The polypeptide is Large ribosomal subunit protein bL32 (Thermosipho africanus (strain TCF52B)).